A 416-amino-acid polypeptide reads, in one-letter code: NADH-quinone oxidoreductase subunit D (416 aa).

Belongs to the complex I 49 kDa subunit family. In terms of assembly, NDH-1 is composed of 14 different subunits. Subunits NuoB, C, D, E, F, and G constitute the peripheral sector of the complex.

It localises to the cell inner membrane. It carries out the reaction a quinone + NADH + 5 H(+)(in) = a quinol + NAD(+) + 4 H(+)(out). In terms of biological role, NDH-1 shuttles electrons from NADH, via FMN and iron-sulfur (Fe-S) centers, to quinones in the respiratory chain. The immediate electron acceptor for the enzyme in this species is believed to be ubiquinone. Couples the redox reaction to proton translocation (for every two electrons transferred, four hydrogen ions are translocated across the cytoplasmic membrane), and thus conserves the redox energy in a proton gradient. The sequence is that of NADH-quinone oxidoreductase subunit D from Rhodopseudomonas palustris (strain BisB5).